The primary structure comprises 401 residues: Argininosuccinate synthase (401 aa).

ATP is bound at residue 8–16 (AYSGGLDTS). An L-citrulline-binding site is contributed by Y85. G115 contributes to the ATP binding site. L-aspartate-binding residues include T117, N121, and D122. Residue N121 coordinates L-citrulline. Residues R125, S173, E258, and Y270 each coordinate L-citrulline.

This sequence belongs to the argininosuccinate synthase family. Type 1 subfamily. In terms of assembly, homotetramer.

It is found in the cytoplasm. The catalysed reaction is L-citrulline + L-aspartate + ATP = 2-(N(omega)-L-arginino)succinate + AMP + diphosphate + H(+). It functions in the pathway amino-acid biosynthesis; L-arginine biosynthesis; L-arginine from L-ornithine and carbamoyl phosphate: step 2/3. The protein is Argininosuccinate synthase of Staphylococcus aureus (strain MSSA476).